The following is a 269-amino-acid chain: Phosphonoacetaldehyde hydrolase (269 aa).

Residue Asp-10 is the Nucleophile of the active site. 2 residues coordinate Mg(2+): Asp-10 and Ala-12. Lys-52 (schiff-base intermediate with substrate) is an active-site residue. Residue Asp-186 participates in Mg(2+) binding.

Belongs to the HAD-like hydrolase superfamily. PhnX family. Homodimer. The cofactor is Mg(2+).

The enzyme catalyses phosphonoacetaldehyde + H2O = acetaldehyde + phosphate + H(+). Functionally, involved in phosphonate degradation. The polypeptide is Phosphonoacetaldehyde hydrolase (Salmonella heidelberg (strain SL476)).